The following is a 385-amino-acid chain: MNNLILVKYASEIFLKGLNKNKFERKLKENIRKKLKDIDHEFITDQNRWFIKSEDLDGVIERVKKVFGVKELCLVTQVEGDFDSIKEEGLKKIKESKAKSFKVETNRANKKFPMNSMEVSRAVGGYILSELGDEIEVDIHNPECKLYVEIRGNAYVFTDKDKIKAVGGLPYGMNGSTMVMLSGGIDSPVAAYLMARRGVETHCVYYHSHPYTSERAKDKVKELAKIVGRYTEKITLYVVPFTEIQMDIIEKCREDELTIIMRRFMMRVACELSERKKIQSITTGESIGQVASQTMEGLMVSNDVSDRPVFRPLIAMDKEDIMDIARDIDTYETSILPYEDCCTIFVPKHPKTKPRVKDMIIAERKLDIEALVNKAIDEMETFIFE.

The 104-residue stretch at 57-160 (DGVIERVKKV…RGNAYVFTDK (104 aa)) folds into the THUMP domain. Residues 180 to 181 (ML), 205 to 206 (YY), Arg262, Gly284, and Gln293 each bind ATP.

The protein belongs to the ThiI family.

Its subcellular location is the cytoplasm. The catalysed reaction is [ThiI sulfur-carrier protein]-S-sulfanyl-L-cysteine + a uridine in tRNA + 2 reduced [2Fe-2S]-[ferredoxin] + ATP + H(+) = [ThiI sulfur-carrier protein]-L-cysteine + a 4-thiouridine in tRNA + 2 oxidized [2Fe-2S]-[ferredoxin] + AMP + diphosphate. It carries out the reaction [ThiS sulfur-carrier protein]-C-terminal Gly-Gly-AMP + S-sulfanyl-L-cysteinyl-[cysteine desulfurase] + AH2 = [ThiS sulfur-carrier protein]-C-terminal-Gly-aminoethanethioate + L-cysteinyl-[cysteine desulfurase] + A + AMP + 2 H(+). It functions in the pathway cofactor biosynthesis; thiamine diphosphate biosynthesis. Its function is as follows. Catalyzes the ATP-dependent transfer of a sulfur to tRNA to produce 4-thiouridine in position 8 of tRNAs, which functions as a near-UV photosensor. Also catalyzes the transfer of sulfur to the sulfur carrier protein ThiS, forming ThiS-thiocarboxylate. This is a step in the synthesis of thiazole, in the thiamine biosynthesis pathway. The sulfur is donated as persulfide by IscS. In Clostridium perfringens (strain ATCC 13124 / DSM 756 / JCM 1290 / NCIMB 6125 / NCTC 8237 / Type A), this protein is Probable tRNA sulfurtransferase.